Here is a 698-residue protein sequence, read N- to C-terminus: Methionine--tRNA ligase (698 aa).

The short motif at proline 21–histidine 31 is the 'HIGH' region element. Zn(2+)-binding residues include cysteine 153, cysteine 156, cysteine 166, and cysteine 169. A 'KMSKS' region motif is present at residues glutamine 341–serine 345. Lysine 344 contacts ATP. A tRNA-binding domain is found at aspartate 599 to serine 698.

It belongs to the class-I aminoacyl-tRNA synthetase family. MetG type 1 subfamily. As to quaternary structure, homodimer. Requires Zn(2+) as cofactor.

Its subcellular location is the cytoplasm. It catalyses the reaction tRNA(Met) + L-methionine + ATP = L-methionyl-tRNA(Met) + AMP + diphosphate. Functionally, is required not only for elongation of protein synthesis but also for the initiation of all mRNA translation through initiator tRNA(fMet) aminoacylation. The protein is Methionine--tRNA ligase of Protochlamydia amoebophila (strain UWE25).